Here is a 168-residue protein sequence, read N- to C-terminus: Alkyl hydroperoxide reductase C (168 aa).

The Thioredoxin domain maps to Glu1–Tyr138. The active-site Cysteine sulfenic acid (-SOH) intermediate is Cys28.

It belongs to the peroxiredoxin family. AhpC/Prx1 subfamily. Homodimer; disulfide-linked, upon oxidation. 5 homodimers assemble to form a ring-like decamer.

It localises to the cytoplasm. It catalyses the reaction a hydroperoxide + NADH + H(+) = an alcohol + NAD(+) + H2O. Thiol-specific peroxidase that catalyzes the reduction of hydrogen peroxide and organic hydroperoxides to water and alcohols, respectively. Plays a role in cell protection against oxidative stress by detoxifying peroxides. This Ferdinandcohnia aciditolerans (strain JCM 32973 / CCTCC AB 2017280 / YN-1) (Bacillus aciditolerans) protein is Alkyl hydroperoxide reductase C.